The following is a 422-amino-acid chain: Probable glycosidase CRR1 (422 aa).

The signal sequence occupies residues M1 to G20. In terms of domain architecture, GH16 spans D67–K339. E217 serves as the catalytic Nucleophile. E221 (proton donor) is an active-site residue.

Belongs to the glycosyl hydrolase 16 family. CRR1 subfamily.

It is found in the spore wall. Spore specific glycosidase involved in spore wall assembly during sporulation. May be involved in copper import. This chain is Probable glycosidase CRR1 (CRR1), found in Saccharomyces cerevisiae (strain ATCC 204508 / S288c) (Baker's yeast).